A 351-amino-acid polypeptide reads, in one-letter code: MNVAIVGATGYGGIQAVNLLKNNKNYKISFLGGNKTSGSKWNDNFPFIYLDTDPYIEKISVENISKNSDVALLCLPNGISSTLTRKLLDRGVKVIDLSADYRYKSLVEWEKVYSKEAVAFKRNDDDLCKEAVYGLPEINKEAISNGRLISCPGCYPTSALIPLVPYLSQGIIENEGIVIDSKSGTSGGGREPNQKLLLSECGEGLSAYGLINHRHTSEIEQVASLISGNKIELLFTPHLVPISRGMHSTIYGRLRDPGLTSDDCRILLDNYYRNFKNITVLPVGTFPSTKWVKNTNQIFLSVKVDIRNGRIVILSVIDNLLKGQTGQAIQNLNIMSGFSMDDGLELTNNFP.

Cys-154 is a catalytic residue.

This sequence belongs to the NAGSA dehydrogenase family. Type 1 subfamily.

The protein localises to the cytoplasm. The enzyme catalyses N-acetyl-L-glutamate 5-semialdehyde + phosphate + NADP(+) = N-acetyl-L-glutamyl 5-phosphate + NADPH + H(+). The protein operates within amino-acid biosynthesis; L-arginine biosynthesis; N(2)-acetyl-L-ornithine from L-glutamate: step 3/4. Functionally, catalyzes the NADPH-dependent reduction of N-acetyl-5-glutamyl phosphate to yield N-acetyl-L-glutamate 5-semialdehyde. The polypeptide is N-acetyl-gamma-glutamyl-phosphate reductase (Prochlorococcus marinus (strain MIT 9312)).